The following is a 626-amino-acid chain: Acetolactate synthase large subunit (626 aa).

Residues 1–13 show a composition bias toward polar residues; sequence MNVAASQQPTPAT. A disordered region spans residues 1-23; the sequence is MNVAASQQPTPATVASRGRSAAP. Residue glutamate 73 participates in thiamine diphosphate binding. FAD-binding positions include arginine 175, 281-302, and 324-343; these read HGTVSAVGALQRSDLLIAIGSR and DIDPAEIGKIKQVEVPIVGD. Residues 416–496 form a thiamine pyrophosphate binding region; the sequence is QHQMWAAQFV…IKIALINNGN (81 aa). Mg(2+) is bound by residues aspartate 467 and asparagine 494.

Belongs to the TPP enzyme family. Dimer of large and small chains. It depends on Mg(2+) as a cofactor. Requires thiamine diphosphate as cofactor.

It catalyses the reaction 2 pyruvate + H(+) = (2S)-2-acetolactate + CO2. Its pathway is amino-acid biosynthesis; L-isoleucine biosynthesis; L-isoleucine from 2-oxobutanoate: step 1/4. It participates in amino-acid biosynthesis; L-valine biosynthesis; L-valine from pyruvate: step 1/4. In Corynebacterium glutamicum (strain ATCC 13032 / DSM 20300 / JCM 1318 / BCRC 11384 / CCUG 27702 / LMG 3730 / NBRC 12168 / NCIMB 10025 / NRRL B-2784 / 534), this protein is Acetolactate synthase large subunit (ilvB).